The chain runs to 557 residues: Putative inactive polypeptide N-acetylgalactosaminyltransferase 11 (557 aa).

The Cytoplasmic segment spans residues 1-4 (MKSL). The helical; Signal-anchor for type II membrane protein transmembrane segment at 5 to 27 (LFGTPCSCAIFILVYCIITLFIW) threads the bilayer. The Lumenal segment spans residues 28–557 (FLYTDNLSNA…MRDICLSVNH (530 aa)). N-linked (GlcNAc...) asparagine glycosylation is found at asparagine 33 and asparagine 103. Intrachain disulfides connect cysteine 99/cysteine 325, cysteine 316/cysteine 397, cysteine 437/cysteine 450, cysteine 472/cysteine 486, and cysteine 511/cysteine 526. The segment at 109–215 (TVTVSIVIAI…RGWLPPLLEP (107 aa)) is catalytic subdomain A. An N-linked (GlcNAc...) asparagine glycan is attached at asparagine 220. The tract at residues 271–333 (PYPSSQLEGR…PCSRVGIIYK (63 aa)) is catalytic subdomain B. A glycan (N-linked (GlcNAc...) asparagine) is linked at asparagine 379. Positions 456–557 (EDWTLTSRCQ…MRDICLSVNH (102 aa)) constitute a Ricin B-type lectin domain.

This sequence belongs to the glycosyltransferase 2 family. GalNAc-T subfamily.

The protein localises to the golgi apparatus membrane. Probable inactive glycosyltransferase. In Drosophila melanogaster (Fruit fly), this protein is Putative inactive polypeptide N-acetylgalactosaminyltransferase 11.